We begin with the raw amino-acid sequence, 342 residues long: uncharacterized protein (342 aa).

This is an uncharacterized protein from Magallana gigas (Pacific oyster).